A 555-amino-acid polypeptide reads, in one-letter code: Formate--tetrahydrofolate ligase (555 aa).

65–72 serves as a coordination point for ATP; that stretch reads TPAGEGKT.

This sequence belongs to the formate--tetrahydrofolate ligase family.

The enzyme catalyses (6S)-5,6,7,8-tetrahydrofolate + formate + ATP = (6R)-10-formyltetrahydrofolate + ADP + phosphate. It functions in the pathway one-carbon metabolism; tetrahydrofolate interconversion. This is Formate--tetrahydrofolate ligase from Paracoccus denitrificans (strain Pd 1222).